A 535-amino-acid polypeptide reads, in one-letter code: Palmdelphin (535 aa).

A coiled-coil region spans residues 1 to 105 (MEEAELLKER…KEELQVSTKE (105 aa)). The interval 423–450 (VVIDDDDDDDDDEEADKKGEENTKESVS) is disordered. Residues 424–436 (VIDDDDDDDDDEE) are compositionally biased toward acidic residues. A compositionally biased stretch (basic and acidic residues) spans 437–446 (ADKKGEENTK).

Belongs to the paralemmin family.

Its subcellular location is the cytoplasm. It is found in the cell projection. The protein localises to the dendrite. It localises to the dendritic spine. The polypeptide is Palmdelphin (palmd) (Xenopus laevis (African clawed frog)).